A 738-amino-acid polypeptide reads, in one-letter code: 1,4-alpha-glucan branching enzyme GlgB (738 aa).

The Nucleophile role is filled by aspartate 417. Residue glutamate 472 is the Proton donor of the active site.

It belongs to the glycosyl hydrolase 13 family. GlgB subfamily. In terms of assembly, monomer.

It catalyses the reaction Transfers a segment of a (1-&gt;4)-alpha-D-glucan chain to a primary hydroxy group in a similar glucan chain.. It participates in glycan biosynthesis; glycogen biosynthesis. Catalyzes the formation of the alpha-1,6-glucosidic linkages in glycogen by scission of a 1,4-alpha-linked oligosaccharide from growing alpha-1,4-glucan chains and the subsequent attachment of the oligosaccharide to the alpha-1,6 position. The chain is 1,4-alpha-glucan branching enzyme GlgB from Burkholderia pseudomallei (strain K96243).